A 379-amino-acid polypeptide reads, in one-letter code: MFKPIRTTHPAIKIINSTLIDLPAPNNISIWWNYGSLLGLCLVIQVLTGLFLSMHYVPNIEMAFSSVALISRDVNYGWLLRSIHANGASMFFLFIYLHAGRGLYYGSYNLSETWNIGVILFLLTMATAFMGYVLPWGQMSFWGATVITNLFSAIPYIGKTLVEWIWGGFAVDNATLNRFFAFHFILPFAIMGATILHIMFLHESGSNNPIGLNADSDRIPFHPYYSIKDTLGYTLAISALSLMVLFEPNLFTDPENFLMANPLVTPIHIKPEWYFLWMYAILRSIPNKLGGVMALFAAIVILFIPPLTSVMNKRSLSFYPLNKTMFWGLVASWAILTWIGGRPVEDPFIIIGQVFTSLYFIYFISSPTISKLWDDSIII.

Transmembrane regions (helical) follow at residues 34–54, 78–99, 114–134, and 179–199; these read YGSL…FLSM, WLLR…YLHA, WNIG…GYVL, and FFAF…LHIM. Positions 84 and 98 each coordinate heme b. Residues histidine 183 and histidine 197 each contribute to the heme b site. Histidine 202 lines the a ubiquinone pocket. 4 helical membrane-spanning segments follow: residues 227–247, 289–309, 321–341, and 349–369; these read IKDT…VLFE, LGGV…PLTS, LNKT…WIGG, and IIIG…SPTI.

It belongs to the cytochrome b family. The main subunits of complex b-c1 are: cytochrome b, cytochrome c1 and the Rieske protein. The cofactor is heme b.

It localises to the mitochondrion inner membrane. In terms of biological role, component of the ubiquinol-cytochrome c reductase complex (complex III or cytochrome b-c1 complex) that is part of the mitochondrial respiratory chain. The b-c1 complex mediates electron transfer from ubiquinol to cytochrome c. Contributes to the generation of a proton gradient across the mitochondrial membrane that is then used for ATP synthesis. This Lumbricus terrestris (Common earthworm) protein is Cytochrome b (MT-CYB).